Reading from the N-terminus, the 315-residue chain is Transaldolase (315 aa).

Residue Lys-125 is the Schiff-base intermediate with substrate of the active site.

Belongs to the transaldolase family. Type 1 subfamily. As to quaternary structure, homodimer.

It is found in the cytoplasm. The catalysed reaction is D-sedoheptulose 7-phosphate + D-glyceraldehyde 3-phosphate = D-erythrose 4-phosphate + beta-D-fructose 6-phosphate. It functions in the pathway carbohydrate degradation; pentose phosphate pathway; D-glyceraldehyde 3-phosphate and beta-D-fructose 6-phosphate from D-ribose 5-phosphate and D-xylulose 5-phosphate (non-oxidative stage): step 2/3. Transaldolase is important for the balance of metabolites in the pentose-phosphate pathway. The polypeptide is Transaldolase (Leptothrix cholodnii (strain ATCC 51168 / LMG 8142 / SP-6) (Leptothrix discophora (strain SP-6))).